The chain runs to 191 residues: Large ribosomal subunit protein bL9c (191 aa).

Residues 1-35 constitute a chloroplast transit peptide; the sequence is MASPSCASTLPWTAAAFSYPRRLQTRRAPSLVIVA.

The protein belongs to the bacterial ribosomal protein bL9 family. In terms of assembly, part of the 50S ribosomal subunit.

It is found in the plastid. The protein resides in the chloroplast. Functionally, binds to the 23S rRNA. This Triticum aestivum (Wheat) protein is Large ribosomal subunit protein bL9c (RPL9).